Reading from the N-terminus, the 523-residue chain is Probable methylmalonate-semialdehyde/malonate-semialdehyde dehydrogenase [acylating], mitochondrial (523 aa).

Residues 1–22 (MLSRLARVQPKCQQLAHFSTSK) constitute a mitochondrion transit peptide. The NAD(+) site is built by phenylalanine 175, lysine 199, and glutamate 202. Cysteine 307 serves as the catalytic Nucleophile. An NAD(+)-binding site is contributed by glutamate 407.

Belongs to the aldehyde dehydrogenase family. In terms of assembly, homodimer.

The protein resides in the mitochondrion. It catalyses the reaction 2-methyl-3-oxopropanoate + NAD(+) + CoA + H2O = propanoyl-CoA + hydrogencarbonate + NADH + H(+). It carries out the reaction 3-oxopropanoate + NAD(+) + CoA + H2O = hydrogencarbonate + acetyl-CoA + NADH + H(+). In terms of biological role, probable malonate and methylmalonate semialdehyde dehydrogenase involved in the catabolism of valine, thymine, and compounds catabolized by way of beta-alanine, including uracil and cytidine. The polypeptide is Probable methylmalonate-semialdehyde/malonate-semialdehyde dehydrogenase [acylating], mitochondrial (alh-8) (Caenorhabditis elegans).